Consider the following 787-residue polypeptide: Integrin beta-6 (787 aa).

The first 21 residues, 1–21, serve as a signal peptide directing secretion; that stretch reads MGIELVCLFLLLLGRNDHVQG. One can recognise a PSI domain in the interval 22-71; that stretch reads GCAWGGAESCSDCLLTGPHCAWCSQENFTHLSGAGERCDTPANLLAKGCQ. Residues 22 to 708 lie on the Extracellular side of the membrane; that stretch reads GCAWGGAESC…KDCPKPPNIP (687 aa). 19 disulfide bridges follow: Cys-23-Cys-41, Cys-31-Cys-454, Cys-34-Cys-59, Cys-44-Cys-70, Cys-197-Cys-204, Cys-252-Cys-293, Cys-394-Cys-406, Cys-426-Cys-452, Cys-456-Cys-476, Cys-467-Cys-479, Cys-481-Cys-490, Cys-492-Cys-519, Cys-502-Cys-517, Cys-511-Cys-522, Cys-524-Cys-537, Cys-539-Cys-560, Cys-544-Cys-558, Cys-552-Cys-563, and Cys-565-Cys-574. N-linked (GlcNAc...) asparagine glycans are attached at residues Asn-48 and Asn-97. The region spanning 131-371 is the VWFA domain; the sequence is YPVDLYYLMD…QLIISAYEEL (241 aa). 3 residues coordinate Mg(2+): Asp-140, Ser-142, and Ser-144. Positions 144, 147, 148, and 179 each coordinate Ca(2+). Asn-235, Asp-237, Pro-239, and Glu-240 together coordinate Ca(2+). Position 240 (Glu-240) interacts with Mg(2+). A glycan (N-linked (GlcNAc...) asparagine) is linked at Asn-260. Ca(2+)-binding residues include Asp-271 and Lys-355. Residue Asn-387 is glycosylated (N-linked (GlcNAc...) asparagine). Asn-418 carries N-linked (GlcNAc...) asparagine glycosylation. 4 consecutive I-EGF domains span residues 456–491, 492–538, 539–575, and 576–615; these read CQRE…PHCE, CGED…PYCQ, CDNF…EYCN, and CTTN…PTCE. N-linked (GlcNAc...) asparagine glycosylation is found at Asn-463 and Asn-471. A glycan (N-linked (GlcNAc...) asparagine) is linked at Asn-541. An N-linked (GlcNAc...) asparagine glycan is attached at Asn-575. 9 disulfides stabilise this stretch: Cys-576-Cys-599, Cys-583-Cys-597, Cys-591-Cys-602, Cys-604-Cys-614, Cys-617-Cys-620, Cys-624-Cys-669, Cys-630-Cys-649, Cys-633-Cys-645, and Cys-677-Cys-701. The helical transmembrane segment at 709–729 threads the bilayer; sequence MIMLGVSLAILLIGVVLLCIW. The interval 730 to 757 is interaction with HAX1; it reads KLLVSFHDRKEVAKFEAERSKAKWQTGT. Over 730-787 the chain is Cytoplasmic; that stretch reads KLLVSFHDRKEVAKFEAERSKAKWQTGTNPLYRGSTSTFKNVTYKHREKHKAGLSSDG.

It belongs to the integrin beta chain family. Heterodimer of an alpha and a beta subunit. Interacts with FLNB. Interacts with HAX1. ITGAV:ITGB6 interacts with FBN1. ITGAV:ITGB6 interacts with TGFB1.

It is found in the cell membrane. It localises to the cell junction. The protein localises to the focal adhesion. Its function is as follows. Integrin alpha-V:beta-6 (ITGAV:ITGB6) is a receptor for fibronectin and cytotactin. It recognizes the sequence R-G-D in its ligands. ITGAV:ITGB6 acts as a receptor for fibrillin-1 (FBN1) and mediates R-G-D-dependent cell adhesion to FBN1. Integrin alpha-V:beta-6 (ITGAV:ITGB6) mediates R-G-D-dependent release of transforming growth factor beta-1 (TGF-beta-1) from regulatory Latency-associated peptide (LAP), thereby playing a key role in TGF-beta-1 activation. The sequence is that of Integrin beta-6 (Itgb6) from Mus musculus (Mouse).